Here is a 277-residue protein sequence, read N- to C-terminus: Phosphoenolpyruvate synthase regulatory protein (277 aa).

157–164 is a binding site for ADP; sequence GVSRCGKT.

This sequence belongs to the pyruvate, phosphate/water dikinase regulatory protein family. PSRP subfamily.

It carries out the reaction [pyruvate, water dikinase] + ADP = [pyruvate, water dikinase]-phosphate + AMP + H(+). The catalysed reaction is [pyruvate, water dikinase]-phosphate + phosphate + H(+) = [pyruvate, water dikinase] + diphosphate. Bifunctional serine/threonine kinase and phosphorylase involved in the regulation of the phosphoenolpyruvate synthase (PEPS) by catalyzing its phosphorylation/dephosphorylation. The chain is Phosphoenolpyruvate synthase regulatory protein from Escherichia coli O6:K15:H31 (strain 536 / UPEC).